Here is a 430-residue protein sequence, read N- to C-terminus: Glutamate-1-semialdehyde 2,1-aminomutase (430 aa).

The residue at position 265 (Lys-265) is an N6-(pyridoxal phosphate)lysine.

This sequence belongs to the class-III pyridoxal-phosphate-dependent aminotransferase family. HemL subfamily. Pyridoxal 5'-phosphate serves as cofactor.

It is found in the cytoplasm. The enzyme catalyses (S)-4-amino-5-oxopentanoate = 5-aminolevulinate. It functions in the pathway porphyrin-containing compound metabolism; protoporphyrin-IX biosynthesis; 5-aminolevulinate from L-glutamyl-tRNA(Glu): step 2/2. The sequence is that of Glutamate-1-semialdehyde 2,1-aminomutase from Caldivirga maquilingensis (strain ATCC 700844 / DSM 13496 / JCM 10307 / IC-167).